The chain runs to 280 residues: Putative sugar uptake protein (280 aa).

The next 10 helical transmembrane spans lie at 4-21, 33-52, 56-78, 91-113, 117-136, 149-166, 176-195, 207-229, 233-255, and 262-279; these read LIALIPALGWGIFSLIAG, MGLGTGALIIGIITAIIHPA, ITIFSLSLISGMFCALGQSGQFI, LSTGFQLIGNTLIGAIIFGEWTS, YLIGTLALILIIVGVSLTAI, IILLLFTSIGYWIYSSFP, LFLPQMIGIFIGSIIFLLVS, WLNIFSGFSYGIAAFSYIFSAQL, ITAFIYSQLCVIISTLGGIFFIG, and ELIATFVGLILIIIGAAI.

Belongs to the GRP transporter (TC 2.A.7.5) family.

It is found in the cell membrane. The chain is Putative sugar uptake protein from Lactobacillus helveticus (Lactobacillus suntoryeus).